The primary structure comprises 461 residues: Bifunctional protein HldE (461 aa).

Positions 1 to 312 are ribokinase; it reads MLEFLSQQKP…IRSFKSMSFE (312 aa). Residue 191–194 participates in ATP binding; it reads NKKE. The active site involves D259. The segment at 334-461 is cytidylyltransferase; that stretch reads FTNGCFDIVH…KIIEKIKDKK (128 aa).

The protein in the N-terminal section; belongs to the carbohydrate kinase PfkB family. This sequence in the C-terminal section; belongs to the cytidylyltransferase family. Homodimer.

The catalysed reaction is D-glycero-beta-D-manno-heptose 7-phosphate + ATP = D-glycero-beta-D-manno-heptose 1,7-bisphosphate + ADP + H(+). It catalyses the reaction D-glycero-beta-D-manno-heptose 1-phosphate + ATP + H(+) = ADP-D-glycero-beta-D-manno-heptose + diphosphate. It functions in the pathway nucleotide-sugar biosynthesis; ADP-L-glycero-beta-D-manno-heptose biosynthesis; ADP-L-glycero-beta-D-manno-heptose from D-glycero-beta-D-manno-heptose 7-phosphate: step 1/4. The protein operates within nucleotide-sugar biosynthesis; ADP-L-glycero-beta-D-manno-heptose biosynthesis; ADP-L-glycero-beta-D-manno-heptose from D-glycero-beta-D-manno-heptose 7-phosphate: step 3/4. Catalyzes the phosphorylation of D-glycero-D-manno-heptose 7-phosphate at the C-1 position to selectively form D-glycero-beta-D-manno-heptose-1,7-bisphosphate. Functionally, catalyzes the ADP transfer from ATP to D-glycero-beta-D-manno-heptose 1-phosphate, yielding ADP-D-glycero-beta-D-manno-heptose. This is Bifunctional protein HldE from Campylobacter jejuni (strain RM1221).